The chain runs to 258 residues: Imidazole glycerol phosphate synthase subunit HisF (258 aa).

Catalysis depends on residues Asp-11 and Asp-130.

Belongs to the HisA/HisF family. As to quaternary structure, heterodimer of HisH and HisF.

The protein resides in the cytoplasm. The enzyme catalyses 5-[(5-phospho-1-deoxy-D-ribulos-1-ylimino)methylamino]-1-(5-phospho-beta-D-ribosyl)imidazole-4-carboxamide + L-glutamine = D-erythro-1-(imidazol-4-yl)glycerol 3-phosphate + 5-amino-1-(5-phospho-beta-D-ribosyl)imidazole-4-carboxamide + L-glutamate + H(+). The protein operates within amino-acid biosynthesis; L-histidine biosynthesis; L-histidine from 5-phospho-alpha-D-ribose 1-diphosphate: step 5/9. IGPS catalyzes the conversion of PRFAR and glutamine to IGP, AICAR and glutamate. The HisF subunit catalyzes the cyclization activity that produces IGP and AICAR from PRFAR using the ammonia provided by the HisH subunit. The protein is Imidazole glycerol phosphate synthase subunit HisF of Escherichia coli O1:K1 / APEC.